Here is a 60-residue protein sequence, read N- to C-terminus: Large ribosomal subunit protein uL30 (60 aa).

This sequence belongs to the universal ribosomal protein uL30 family. As to quaternary structure, part of the 50S ribosomal subunit.

This is Large ribosomal subunit protein uL30 from Leuconostoc citreum (strain KM20).